The chain runs to 283 residues: Phosphate import ATP-binding protein PstB (283 aa).

Polar residues predominate over residues 1–20 (MAQTLAQTKQISQSHTFDVS). The tract at residues 1–33 (MAQTLAQTKQISQSHTFDVSQSHHKTPNDTNSH) is disordered. Residues 37–278 (YSTQNLDLWY…PSNKKTEDYI (242 aa)) form the ABC transporter domain. 69 to 76 (GPSGCGKS) provides a ligand contact to ATP.

The protein belongs to the ABC transporter superfamily. Phosphate importer (TC 3.A.1.7) family. The complex is composed of two ATP-binding proteins (PstB), two transmembrane proteins (PstC and PstA) and a solute-binding protein (PstS).

Its subcellular location is the cell membrane. The enzyme catalyses phosphate(out) + ATP + H2O = ADP + 2 phosphate(in) + H(+). Its function is as follows. Part of the ABC transporter complex PstSACB involved in phosphate import. Responsible for energy coupling to the transport system. The polypeptide is Phosphate import ATP-binding protein PstB (Staphylococcus aureus (strain bovine RF122 / ET3-1)).